A 447-amino-acid chain; its full sequence is NAC domain containing protein 50 (447 aa).

Residues 1–21 (MGRESLAVVSSPPSATAPSTA) are disordered. The 152-residue stretch at 27–178 (LAPGFRFHPT…AYVLCRVFHK (152 aa)) folds into the NAC domain. Residues 126–184 (LGMKKTLVFHSGRAPDGLRTNWVMHEYRLVEYETETNGSLLQDAYVLCRVFHKNNIGPP) mediate DNA binding. 2 disordered regions span residues 246–303 (DATP…NKEA) and 371–392 (KENQQKEETSPPSPIASPEEKV). A compositionally biased stretch (basic and acidic residues) spans 281–293 (TLKREHAEEDERP). Residues 392-447 (VNDLQKEVHQMSVERETFKLEMMSAEAMISILQSRIDALRQENEELKKKNASGQAS) are a coiled coil.

In terms of assembly, interacts with JMJ14 and NAC052. As to expression, mostly expressed in floral organs, and, at low levels, in other organs.

It is found in the nucleus. Transcriptional repressor that binds to the motif 5'-(C/T)A(C/A)G-3' in the promoter of target genes. Also binds to the 5'-CTTGNNNNNCAAG-3' consensus sequence in chromatin. Can bind to the mitochondrial dysfunction motif (MDM) present in the upstream regions of mitochondrial dysfunction stimulon (MDS) genes involved in mitochondrial retrograde regulation (MRR). Together with NAC051/NAC052 and JMJ14, regulates gene expression and flowering time by associating with the histone demethylase JMJ14, probably by the promotion of RNA-mediated gene silencing. The polypeptide is NAC domain containing protein 50 (Arabidopsis thaliana (Mouse-ear cress)).